The chain runs to 316 residues: Retinol dehydrogenase 7 (316 aa).

An NADP(+)-binding site is contributed by 33–57; sequence FITGCDSGFGNLLARQLDRRGMRVL. Residue serine 163 participates in substrate binding. Catalysis depends on tyrosine 175, which acts as the Proton acceptor.

The protein belongs to the short-chain dehydrogenases/reductases (SDR) family. In terms of tissue distribution, highly expressed in liver. Also expressed in lung, eye, kidney, and brain.

The protein resides in the microsome. The protein localises to the endoplasmic reticulum. It carries out the reaction all-trans-retinol--[retinol-binding protein] + NAD(+) = all-trans-retinal--[retinol-binding protein] + NADH + H(+). It functions in the pathway cofactor metabolism; retinol metabolism. Its function is as follows. Acts on androgens and retinols, i.e. has steroid 3-alpha- and 17-beta-dehydrogenase and cis/trans-retinol catalytic activities. This Mus musculus (Mouse) protein is Retinol dehydrogenase 7 (Rdh7).